A 422-amino-acid chain; its full sequence is Histidine--tRNA ligase (422 aa).

This sequence belongs to the class-II aminoacyl-tRNA synthetase family. Homodimer.

Its subcellular location is the cytoplasm. The enzyme catalyses tRNA(His) + L-histidine + ATP = L-histidyl-tRNA(His) + AMP + diphosphate + H(+). In Vibrio vulnificus (strain CMCP6), this protein is Histidine--tRNA ligase.